A 450-amino-acid polypeptide reads, in one-letter code: Perilipin-2 (450 aa).

The residue at position 2 (A2) is an N-acetylalanine. Phosphoserine is present on S215. Y232 bears the Phosphotyrosine mark. Positions 411-450 (ESESAQAPGTTRRPGRWSRKHPKPVPVSNAEGSQPDDSSS) are disordered. Residues 423–433 (RPGRWSRKHPK) show a composition bias toward basic residues. A compositionally biased stretch (polar residues) spans 440 to 450 (AEGSQPDDSSS).

The protein belongs to the perilipin family. In terms of assembly, interacts with IRGC. Post-translationally, acylated; primarily with C14, C16 and C18 fatty acids. In terms of processing, phosphorylation at Tyr-232 by isoform 1 of CHKA (CHKalpha2) promotes dissociation from lipid droplets: dissociation is followed by recruitment of autophagosome machinery to lipid droplets and subsequent lipid droplet lipolysis. Polyubiquitination of Nt-acetylatable A-PLIN2 by MARCHF6 lead to degradation by 26S proteasomes. As to expression, milk lipid globules.

The protein resides in the membrane. It is found in the lipid droplet. In terms of biological role, structural component of lipid droplets, which is required for the formation and maintenance of lipid storage droplets. This chain is Perilipin-2 (PLIN2), found in Bos taurus (Bovine).